Here is a 650-residue protein sequence, read N- to C-terminus: Putative F-box protein R757 (650 aa).

The F-box domain maps to 7–53 (FSVMESLPTELAYHVLSFIDFNSVVTYRLCSQESNNFIKSMLVFFPI).

The polypeptide is Putative F-box protein R757 (Acanthamoeba polyphaga mimivirus (APMV)).